Reading from the N-terminus, the 230-residue chain is Probable septum site-determining protein MinC (230 aa).

The protein belongs to the MinC family. As to quaternary structure, interacts with MinD and FtsZ.

Cell division inhibitor that blocks the formation of polar Z ring septums. Rapidly oscillates between the poles of the cell to destabilize FtsZ filaments that have formed before they mature into polar Z rings. Prevents FtsZ polymerization. The protein is Probable septum site-determining protein MinC of Erwinia tasmaniensis (strain DSM 17950 / CFBP 7177 / CIP 109463 / NCPPB 4357 / Et1/99).